A 90-amino-acid chain; its full sequence is UPF0335 protein R02793 (90 aa).

Belongs to the UPF0335 family.

This chain is UPF0335 protein R02793, found in Rhizobium meliloti (strain 1021) (Ensifer meliloti).